We begin with the raw amino-acid sequence, 389 residues long: 23S rRNA (uracil(747)-C(5))-methyltransferase RlmC (389 aa).

Positions 5, 13, 16, and 94 each coordinate [4Fe-4S] cluster. Residues Gln-219, Phe-248, Glu-275, and Asn-321 each coordinate S-adenosyl-L-methionine. Catalysis depends on Cys-348, which acts as the Nucleophile.

The protein belongs to the class I-like SAM-binding methyltransferase superfamily. RNA M5U methyltransferase family. RlmC subfamily.

It catalyses the reaction uridine(747) in 23S rRNA + S-adenosyl-L-methionine = 5-methyluridine(747) in 23S rRNA + S-adenosyl-L-homocysteine + H(+). Functionally, catalyzes the formation of 5-methyl-uridine at position 747 (m5U747) in 23S rRNA. The chain is 23S rRNA (uracil(747)-C(5))-methyltransferase RlmC from Mannheimia succiniciproducens (strain KCTC 0769BP / MBEL55E).